Consider the following 453-residue polypeptide: Phosphoglucosamine mutase (453 aa).

Ser-105 (phosphoserine intermediate) is an active-site residue. Ser-105, Asp-244, Asp-246, and Asp-248 together coordinate Mg(2+). The residue at position 105 (Ser-105) is a Phosphoserine.

The protein belongs to the phosphohexose mutase family. The cofactor is Mg(2+). Post-translationally, activated by phosphorylation.

The enzyme catalyses alpha-D-glucosamine 1-phosphate = D-glucosamine 6-phosphate. Its function is as follows. Catalyzes the conversion of glucosamine-6-phosphate to glucosamine-1-phosphate. The sequence is that of Phosphoglucosamine mutase from Chromohalobacter salexigens (strain ATCC BAA-138 / DSM 3043 / CIP 106854 / NCIMB 13768 / 1H11).